The following is a 132-amino-acid chain: Antileukoproteinase (132 aa).

The signal sequence occupies residues 1 to 24; the sequence is MKFSGLFPFLLLALGTLALWAVEG. Residues 28–76 form the WAP 1 domain; sequence EALKAGACPPRKSAQCFGNEKPRCSSDWQCPHKKKCCLDTCGTECLDPV. Disulfide bonds link cysteine 35/cysteine 64, cysteine 43/cysteine 68, cysteine 51/cysteine 63, and cysteine 57/cysteine 72. Residue asparagine 77 is glycosylated (N-linked (GlcNAc...) asparagine). The region spanning 82–130 is the WAP 2 domain; sequence VKKKPGTCPVIHGQCLMLKPLNHCETDDQCIGALKCCKAMCGKVCLSPV. Cystine bridges form between cysteine 89-cysteine 118, cysteine 96-cysteine 122, cysteine 105-cysteine 117, and cysteine 111-cysteine 126.

In terms of assembly, interacts with GRN; interaction protects progranulin from proteolysis. Detected in bronchoalveolar fluid (at protein level). Detected in large and small intestine, trachea, skin, lung and tongue.

It is found in the secreted. Acid-stable proteinase inhibitor with strong affinities for trypsin, chymotrypsin, elastase, and cathepsin G. Modulates the inflammatory and immune responses after bacterial infection, and after infection by the intracellular parasite L.major. Down-regulates responses to bacterial lipopolysaccharide (LPS). Plays a role in regulating the activation of NF-kappa-B and inflammatory responses. Has antimicrobial activity against mycobacteria, but not against salmonella. Contributes to normal resistance against infection by M.tuberculosis. Required for normal resistance to infection by L.major. Required for normal wound healing, probably by preventing tissue damage by limiting protease activity. Together with ELANE, required for normal differentiation and proliferation of bone marrow myeloid cells. This chain is Antileukoproteinase (SLPI), found in Ovis aries (Sheep).